The following is a 318-amino-acid chain: Protease HtpX homolog (318 aa).

2 consecutive transmembrane segments (helical) span residues 6–26 and 28–48; these read TAMLLAFMTALFMFVGFLIGG and AGMMIAFLIAAGMNFFSYWNS. Histidine 130 is a binding site for Zn(2+). Residue glutamate 131 is part of the active site. Residue histidine 134 coordinates Zn(2+). 2 helical membrane passes run 145–165 and 173–193; these read ITATLAGAISMLGNFAFFFGG and PLGFVGVLVAMIVAPLAAMLV. Glutamate 202 lines the Zn(2+) pocket. Residues 284-318 form a disordered region; the sequence is NVSTGPVRAVNPTRKSRSVPNTGRGGSQPPRGPWS.

The protein belongs to the peptidase M48B family. It depends on Zn(2+) as a cofactor.

The protein resides in the cell inner membrane. The chain is Protease HtpX homolog from Rhizobium etli (strain CIAT 652).